Here is a 256-residue protein sequence, read N- to C-terminus: Homeobox protein TGIF2LX (256 aa).

Residues methionine 1–serine 45 form a disordered region. Residues alanine 9 to proline 34 show a composition bias toward basic and acidic residues. A compositionally biased stretch (polar residues) spans alanine 35–serine 45. The homeobox; TALE-type DNA-binding region spans glutamate 62–aspartate 125. Residues valine 136–glutamate 224 form a disordered region. Polar residues predominate over residues aspartate 166–glycine 179. A compositionally biased stretch (low complexity) spans valine 209–glutamate 224.

The protein belongs to the TALE/TGIF homeobox family.

It localises to the nucleus. Its function is as follows. May have a transcription role in testis. This Papio hamadryas (Hamadryas baboon) protein is Homeobox protein TGIF2LX (TGIF2LX).